The sequence spans 504 residues: uncharacterized protein (504 aa).

A helical membrane pass occupies residues 6 to 26 (NLFIIFIFLFLLSQVSAYITF).

This sequence to M.jannaschii MJ1506 and MJ1561.

It is found in the membrane. This is an uncharacterized protein from Methanocaldococcus jannaschii (strain ATCC 43067 / DSM 2661 / JAL-1 / JCM 10045 / NBRC 100440) (Methanococcus jannaschii).